Reading from the N-terminus, the 255-residue chain is Small ribosomal subunit protein uS3c (255 aa).

The 74-residue stretch at 51 to 124 folds into the KH type-2 domain; the sequence is IRESSNTSYG…NKNQNKNTGQ (74 aa). The segment at 96 to 121 is disordered; that stretch reads EKNRDKNKSNKNSALDQSVNKNQNKN. The span at 108 to 121 shows a compositional bias: polar residues; it reads SALDQSVNKNQNKN.

It belongs to the universal ribosomal protein uS3 family. Part of the 30S ribosomal subunit.

It is found in the plastid. The protein localises to the chloroplast. This Chaetosphaeridium globosum (Charophycean green alga) protein is Small ribosomal subunit protein uS3c (rps3).